The primary structure comprises 152 residues: ALK and LTK ligand 1 (152 aa).

Positions 1 to 23 (MRAEKRWHILLSMILLLITSSQC) are cleaved as a signal peptide. 2 disulfides stabilise this stretch: Cys113–Cys149 and Cys127–Cys136.

This sequence belongs to the ALKAL family. As to expression, expressed at low level in the notochord and iridophore stripes, the eye and the swim bladder.

The protein resides in the secreted. It localises to the cell membrane. In terms of biological role, cytokine that acts as a physiological ligand for receptor tyrosine kinases LTK and ALK. Required for iridophore development in the adult eye by acting as a receptor for LTK. The chain is ALK and LTK ligand 1 from Danio rerio (Zebrafish).